A 123-amino-acid chain; its full sequence is Small ribosomal subunit protein uS11 (123 aa).

It belongs to the universal ribosomal protein uS11 family. In terms of assembly, part of the 30S ribosomal subunit. Interacts with proteins S7 and S18. Binds to IF-3.

Functionally, located on the platform of the 30S subunit, it bridges several disparate RNA helices of the 16S rRNA. Forms part of the Shine-Dalgarno cleft in the 70S ribosome. In Coxiella burnetii (strain RSA 331 / Henzerling II), this protein is Small ribosomal subunit protein uS11.